Here is a 157-residue protein sequence, read N- to C-terminus: SsrA-binding protein (157 aa).

It belongs to the SmpB family.

It localises to the cytoplasm. Functionally, required for rescue of stalled ribosomes mediated by trans-translation. Binds to transfer-messenger RNA (tmRNA), required for stable association of tmRNA with ribosomes. tmRNA and SmpB together mimic tRNA shape, replacing the anticodon stem-loop with SmpB. tmRNA is encoded by the ssrA gene; the 2 termini fold to resemble tRNA(Ala) and it encodes a 'tag peptide', a short internal open reading frame. During trans-translation Ala-aminoacylated tmRNA acts like a tRNA, entering the A-site of stalled ribosomes, displacing the stalled mRNA. The ribosome then switches to translate the ORF on the tmRNA; the nascent peptide is terminated with the 'tag peptide' encoded by the tmRNA and targeted for degradation. The ribosome is freed to recommence translation, which seems to be the essential function of trans-translation. In Chlorobium luteolum (strain DSM 273 / BCRC 81028 / 2530) (Pelodictyon luteolum), this protein is SsrA-binding protein.